Consider the following 277-residue polypeptide: Large ribosomal subunit protein uL2 (277 aa).

Residues Ser211–Lys277 are disordered.

The protein belongs to the universal ribosomal protein uL2 family. Part of the 50S ribosomal subunit. Forms a bridge to the 30S subunit in the 70S ribosome.

One of the primary rRNA binding proteins. Required for association of the 30S and 50S subunits to form the 70S ribosome, for tRNA binding and peptide bond formation. It has been suggested to have peptidyltransferase activity; this is somewhat controversial. Makes several contacts with the 16S rRNA in the 70S ribosome. The chain is Large ribosomal subunit protein uL2 from Staphylococcus epidermidis (strain ATCC 35984 / DSM 28319 / BCRC 17069 / CCUG 31568 / BM 3577 / RP62A).